Consider the following 220-residue polypeptide: Cell surface glycolipoprotein MPB83 (220 aa).

Residues 1–24 (MINVQAKPAAAASLAAIAIAFLAG) form the signal peptide. The N-palmitoyl cysteine moiety is linked to residue C25. The S-diacylglycerol cysteine moiety is linked to residue C25. O-linked (Man...) threonine glycans are attached at residues T48 and T49. The 133-residue stretch at 83 to 215 (QDPVATAASN…ATVYMIDTVL (133 aa)) folds into the FAS1 domain.

In terms of assembly, interacts with host (human) TLR2. Post-translationally, O-glycosylated. Contains 0-3 mannose residues attached to residues 48-49 in various configurations; the dominant glycoform is Thr-48(Man)/Thr-49(Man2) with an unusual Man(1-&gt;3)Man linkage, but Thr48(Man3)/Thr49(Man0) through to Thr48(Man0/)Thr49(Man3) are also seen. In terms of processing, when isolated from culture filtrate runs as 25 and 23 kDa proteins; the larger protein is much less abundant, mostly associated with the cell and starts at residue 28, the shorter is more abundant and starts at residue 48.

The protein localises to the cell membrane. It is found in the secreted. Its subcellular location is the cell wall. In terms of biological role, induces expression of human (host) matrix metalloproteinase-9 (MMP9) in a TLR1/TLR2-dependent fashion; the acylated 20 first mature residues (residues 25-40) induce the most expression, but whole recombinant protein (non-acylated and non-glycosylated), and mannosylated but not acylated protein (residues 26-220) also induce expression. The chain is Cell surface glycolipoprotein MPB83 (mpb83) from Mycobacterium bovis (strain ATCC BAA-935 / AF2122/97).